The chain runs to 444 residues: Tryptophan 5-hydroxylase 1 (444 aa).

The 76-residue stretch at Thr-19–Gln-94 folds into the ACT domain. The residue at position 58 (Ser-58) is a Phosphoserine; by PKA. Residues Tyr-235, Arg-257, and Thr-265 each coordinate L-tryptophan. 3 residues coordinate Fe cation: His-272, His-277, and Glu-317. Positions 336 and 366 each coordinate L-tryptophan.

It belongs to the biopterin-dependent aromatic amino acid hydroxylase family. As to quaternary structure, homotetramer. Interacts with DNAJC12. The cofactor is Fe(2+). Ubiquitinated, leading to its degradation by the proteasome. Ubiquitinated is triggered by phosphorylation. In terms of processing, phosphorylated; triggering degradation by the proteasome.

The enzyme catalyses (6R)-L-erythro-5,6,7,8-tetrahydrobiopterin + L-tryptophan + O2 = 5-hydroxy-L-tryptophan + (4aS,6R)-4a-hydroxy-L-erythro-5,6,7,8-tetrahydrobiopterin. It functions in the pathway aromatic compound metabolism; serotonin biosynthesis; serotonin from L-tryptophan: step 1/2. In terms of biological role, oxidizes L-tryptophan to 5-hydroxy-l-tryptophan in the rate-determining step of serotonin biosynthesis. In Rattus norvegicus (Rat), this protein is Tryptophan 5-hydroxylase 1 (Tph1).